Reading from the N-terminus, the 40-residue chain is Photosystem II reaction center protein J (40 aa).

The helical transmembrane segment at 8–28 (IPLWVIGTVAGILVIGLIGIF) threads the bilayer.

The protein belongs to the PsbJ family. In terms of assembly, PSII is composed of 1 copy each of membrane proteins PsbA, PsbB, PsbC, PsbD, PsbE, PsbF, PsbH, PsbI, PsbJ, PsbK, PsbL, PsbM, PsbT, PsbX, PsbY, PsbZ, Psb30/Ycf12, at least 3 peripheral proteins of the oxygen-evolving complex and a large number of cofactors. It forms dimeric complexes.

It is found in the plastid. Its subcellular location is the chloroplast thylakoid membrane. Functionally, one of the components of the core complex of photosystem II (PSII). PSII is a light-driven water:plastoquinone oxidoreductase that uses light energy to abstract electrons from H(2)O, generating O(2) and a proton gradient subsequently used for ATP formation. It consists of a core antenna complex that captures photons, and an electron transfer chain that converts photonic excitation into a charge separation. The chain is Photosystem II reaction center protein J from Lepidium virginicum (Virginia pepperweed).